We begin with the raw amino-acid sequence, 458 residues long: MSSGRIVQIIGAVIDVEFPRDAVPSVYNALKVQGAETTLEVQQQLGDGVVRTIAMGSTEGLKRGLDVVDTKAAISVPVGKATLGRIMDVLGNPIDEAGPIGEEERRGIHRKAPSFAEQAGGNDLLETGIKVIDLVCPFAKGGKVGLFGGAGVGKTVNMMELIRNIAIEHSGYSVFAGVGERTREGNDFYHEMKDSNVLDKVALVYGQMNEPPGNRLRVALTGLTMAEKFRDEGNDVLLFVDNIYRYTLAGTEVSALLGRMPSAVGYQPTLAEEMGVLQERITSTKEGSITSIQAVYVPADDLTDPSPATTFAHLDATVVLSRDIASLGIYPAVDPLDSTSRQLDPNVIGNEHYETARQVQYVLQRYKELKDIIAILGMDELSETDKQLVARARKIQRFLSQPFFVAEVFTGSPGKYVSLKDTIAGFSGILKGDYDHLPEQAFYMVGSIDEAIEKAKKL.

148–155 provides a ligand contact to ATP; that stretch reads GGAGVGKT.

Belongs to the ATPase alpha/beta chains family. As to quaternary structure, F-type ATPases have 2 components, CF(1) - the catalytic core - and CF(0) - the membrane proton channel. CF(1) has five subunits: alpha(3), beta(3), gamma(1), delta(1), epsilon(1). CF(0) has three main subunits: a(1), b(2) and c(9-12). The alpha and beta chains form an alternating ring which encloses part of the gamma chain. CF(1) is attached to CF(0) by a central stalk formed by the gamma and epsilon chains, while a peripheral stalk is formed by the delta and b chains.

Its subcellular location is the cell inner membrane. The catalysed reaction is ATP + H2O + 4 H(+)(in) = ADP + phosphate + 5 H(+)(out). In terms of biological role, produces ATP from ADP in the presence of a proton gradient across the membrane. The catalytic sites are hosted primarily by the beta subunits. The protein is ATP synthase subunit beta of Pseudomonas entomophila (strain L48).